The primary structure comprises 353 residues: MNAKIVVLPGDGIGPEVTAEAVRVLEAVARRGGHALSFTERLMGGCSIDAHGTALTPEVLADCQAADAVLLGAVGGPKWDDPRAKVRPEQGLLGLRKGLGVFANLRPVRVHPSLLDSSPLRPEKLRGVDIMVIRELTGGLYFGQPKGRDVKDGHARAVDTLEYQDFEVRRVVELAFRIAKGRKKKVTSVDKANVLESSRLWRELATAIGQANPDVALDHMLVDTAAMRLVTSPATLDVVVTENMFGDILTDEASVLAGSMGMLPSASIGEQGPGLYEPIHGSAPDIAGKGIANPVGTVLSAALLLRHSLGLEPEAAAIERAVDQTITDGCRTADLGGKLSTRAMADEILKRLA.

Gly-76–Glu-89 contacts NAD(+). Residues Arg-96, Arg-106, Arg-134, and Asp-223 each contribute to the substrate site. Mg(2+) contacts are provided by Asp-223, Asp-247, and Asp-251. Gly-281–Asn-293 contributes to the NAD(+) binding site.

The protein belongs to the isocitrate and isopropylmalate dehydrogenases family. LeuB type 1 subfamily. As to quaternary structure, homodimer. Mg(2+) serves as cofactor. The cofactor is Mn(2+).

The protein resides in the cytoplasm. It carries out the reaction (2R,3S)-3-isopropylmalate + NAD(+) = 4-methyl-2-oxopentanoate + CO2 + NADH. It participates in amino-acid biosynthesis; L-leucine biosynthesis; L-leucine from 3-methyl-2-oxobutanoate: step 3/4. Its function is as follows. Catalyzes the oxidation of 3-carboxy-2-hydroxy-4-methylpentanoate (3-isopropylmalate) to 3-carboxy-4-methyl-2-oxopentanoate. The product decarboxylates to 4-methyl-2 oxopentanoate. This is 3-isopropylmalate dehydrogenase from Anaeromyxobacter dehalogenans (strain 2CP-C).